The sequence spans 272 residues: Zinc finger protein 32 (272 aa).

Residues 50-65 (RREKLEQKSPESKALQ) show a composition bias toward basic and acidic residues. A disordered region spans residues 50–69 (RREKLEQKSPESKALQEDSP). 3 C2H2-type zinc fingers span residues 76 to 98 (YDCQ…ERIH), 104 to 126 (FECT…QRIH), and 132 to 154 (YQCK…ERLH). Zn(2+) contacts are provided by Cys78, Cys81, His94, His98, Cys106, Cys109, His122, His126, Ser140, Gln143, Gly156, Tyr160, Phe197, Lys200, Leu213, Ala217, Cys246, Cys249, His262, and Cys266. 2 C2H2-type zinc fingers span residues 160–182 (YECA…RRVH) and 188–210 (YRCD…IRVH). The segment at 216 to 238 (YACSHCRKSFHTRGNCLLHGKVH) adopts a C2H2-type 6 zinc-finger fold. Residues 244–266 (YLCGQCGKSFTQRGSLAVHQRSC) form a CCHC-type zinc finger.

The protein belongs to the krueppel C2H2-type zinc-finger protein family.

Its subcellular location is the nucleus. May be involved in transcriptional regulation. This Mus musculus (Mouse) protein is Zinc finger protein 32 (Znf32).